The chain runs to 427 residues: Mitochondrial distribution and morphology protein 10 (427 aa).

Over residues 393-414 (SSYANSQATAGAQGSSGGPPTS) the composition is skewed to low complexity. The tract at residues 393 to 427 (SSYANSQATAGAQGSSGGPPTSYWRGVGVSVSYSS) is disordered.

This sequence belongs to the MDM10 family. In terms of assembly, component of the ER-mitochondria encounter structure (ERMES) or MDM complex, composed of mmm1, mdm10, mdm12 and mdm34. Associates with the mitochondrial outer membrane sorting assembly machinery SAM(core) complex.

It localises to the mitochondrion outer membrane. Its function is as follows. Component of the ERMES/MDM complex, which serves as a molecular tether to connect the endoplasmic reticulum and mitochondria. Components of this complex are involved in the control of mitochondrial shape and protein biogenesis and may function in phospholipid exchange. mdm10 is involved in the late assembly steps of the general translocase of the mitochondrial outer membrane (TOM complex). Functions in the tom40-specific route of the assembly of outer membrane beta-barrel proteins, including the association of tom40 with the receptor tom22 and small TOM proteins. Can associate with the SAM(core) complex as well as the mdm12-mmm1 complex, both involved in late steps of the major beta-barrel assembly pathway, that is responsible for biogenesis of all outer membrane beta-barrel proteins. May act as a switch that shuttles between both complexes and channels precursor proteins into the tom40-specific pathway. Plays a role in mitochondrial morphology and in the inheritance of mitochondria. The sequence is that of Mitochondrial distribution and morphology protein 10 (mdmB) from Emericella nidulans (strain FGSC A4 / ATCC 38163 / CBS 112.46 / NRRL 194 / M139) (Aspergillus nidulans).